The primary structure comprises 853 residues: Dynein axonemal assembly factor 5 (853 aa).

Position 2 is an N-acetylalanine (Ala-2). HEAT repeat units lie at residues 69 to 107 (GPWARLLLPRLLRLLSDPAEGCRALAAHLLDLGLRRAAR), 200 to 238 (HMQSESLIGPLMQTISHQHWKVRVAVIEATGTVIQFGSG), 240 to 276 (SVDDVLSHFAQRLFDDVPQVRQAVTSVVGGWLLNLRD), 278 to 316 (YSFLHKLTPLLLSSFSDEMPEIRQTATSLWEKVGLQWQQ), 374 to 412 (RVKAAQLLPVLLLHAEDHITQHLEIVLRTLHQACTDEEK), 597 to 636 (GEALQHVIPTLRACLQPSTDPHMRLKLFSILSMMLLRPKD), 694 to 732 (QEAQETLMPQVLATLEDDSQTTRLMSCRIINMFLKNSGD), 736 to 774 (PEKFLKVYPELLKRLDDVSNDVRMAAASALLTWLKCIES), and 782 to 820 (QSSVQFLYRELLVHLDDPESAIQDTVLEVLKEGSVLFPD).

This sequence belongs to the DNAAF5 family. Interacts with DNAI2; probably involved in outer arm dynein assembly. Expressed in ciliated cells including ependymal cells lining the lateral ventricles and multiciliated epithelium of oviduct ampulla.

The protein resides in the cytoplasm. Its subcellular location is the cytoplasmic granule. In terms of biological role, cytoplasmic protein involved in the delivery of the dynein machinery to the motile cilium. It is required for the assembly of the axonemal dynein inner and outer arms, two structures attached to the peripheral outer doublet A microtubule of the axoneme, that play a crucial role in cilium motility. In Mus musculus (Mouse), this protein is Dynein axonemal assembly factor 5.